Reading from the N-terminus, the 887-residue chain is Golgin IMH1 (887 aa).

Disordered stretches follow at residues 16–50, 142–214, 240–301, and 783–822; these read LAKG…EELP, QESL…MKSQ, GASQ…SAGD, and LKMS…SISS. Basic and acidic residues-rich tracts occupy residues 37–50 and 145–210; these read GRRE…EELP and LEQR…HAAE. Positions 118–241 form a coiled coil; that stretch reads AMLTEEIKRI…YKSTIQELGA (124 aa). Residues 240–254 show a composition bias toward polar residues; it reads GASQATGEAQPSSEA. Basic residues predominate over residues 258-273; that stretch reads RGKKGKGKRGKGKKRV. Residues 299–788 are a coiled coil; sequence AGDEIIEAIE…LSTQLKMSKD (490 aa). A compositionally biased stretch (low complexity) spans 788–807; that stretch reads DMSSQSRHSSRSGSLVSPSS. Residues 808 to 822 are compositionally biased toward polar residues; the sequence is DNETGNSPRKISISS. The GRIP domain maps to 837 to 885; that stretch reads EMESNEKLAYIRNVLLGFLEHREQRSQLLPVVSTLLQLSSHDEKRLLTS.

The protein resides in the cytoplasm. The protein localises to the golgi apparatus membrane. Functionally, involved in vesicular transport between an endosomal compartment and the Golgi apparatus. The protein is Golgin IMH1 (IMH1) of Eremothecium gossypii (strain ATCC 10895 / CBS 109.51 / FGSC 9923 / NRRL Y-1056) (Yeast).